Here is a 337-residue protein sequence, read N- to C-terminus: Cytoskeleton protein RodZ (337 aa).

Topologically, residues 1-111 (MNTEATHDQN…LGKRRKKRDG (111 aa)) are cytoplasmic. Residues 19-71 (LRNAREQLGLSQQAVAERLCLKVSTVRDIEEDKAPADLASTFLRGYIRSYARL) form the HTH cro/C1-type domain. Positions 30-49 (QQAVAERLCLKVSTVRDIEE) form a DNA-binding region, H-T-H motif. A helical; Signal-anchor for type II membrane protein transmembrane segment spans residues 112–132 (WLMTFTWLVLFVVIGLSGAWW). The Periplasmic segment spans residues 133–337 (WQDHKAQQEE…TLNAEQSPAQ (205 aa)). Residues 145-167 (TMADQSSAELSSNSEQGQSVPLN) are compositionally biased toward polar residues. The interval 145 to 218 (TMADQSSAEL…AVVSPSQANV (74 aa)) is disordered. Low complexity predominate over residues 168 to 207 (TSTTTDPATTSTPPASVDTTATNTQTPAVTAPAPAVDPQQ). The span at 208–218 (NAVVSPSQANV) shows a compositional bias: polar residues.

The protein belongs to the RodZ family.

The protein resides in the cell inner membrane. Functionally, cytoskeletal protein that is involved in cell-shape control through regulation of the length of the long axis. This chain is Cytoskeleton protein RodZ, found in Shigella flexneri serotype 5b (strain 8401).